The primary structure comprises 207 residues: Guanylate kinase (207 aa).

The Guanylate kinase-like domain maps to Gly4–Arg184. Ala11–Ser18 is an ATP binding site.

It belongs to the guanylate kinase family.

The protein resides in the cytoplasm. It carries out the reaction GMP + ATP = GDP + ADP. Functionally, essential for recycling GMP and indirectly, cGMP. This is Guanylate kinase from Yersinia pestis bv. Antiqua (strain Antiqua).